We begin with the raw amino-acid sequence, 189 residues long: Ribosome maturation factor RimM (189 aa).

Over residues 1 to 16 the composition is skewed to polar residues; it reads MAPSCPTRSRVWSSRT. The interval 1–21 is disordered; that stretch reads MAPSCPTRSRVWSSRTSPPPD. Residues 118–189 enclose the PRC barrel domain; sequence ENEFYWSDLI…TVEVDWGEDY (72 aa).

Belongs to the RimM family. In terms of assembly, binds ribosomal protein uS19.

It is found in the cytoplasm. In terms of biological role, an accessory protein needed during the final step in the assembly of 30S ribosomal subunit, possibly for assembly of the head region. Essential for efficient processing of 16S rRNA. May be needed both before and after RbfA during the maturation of 16S rRNA. It has affinity for free ribosomal 30S subunits but not for 70S ribosomes. The sequence is that of Ribosome maturation factor RimM from Thiobacillus denitrificans (strain ATCC 25259 / T1).